Here is a 419-residue protein sequence, read N- to C-terminus: Histone acetyltransferase type B subunit 2 (419 aa).

5 WD repeats span residues 131–171, 177–217, 225–265, 267–307, and 311–351; these read PHDG…VEAL, YHTE…KNIK, AHTD…IIHN, NTKK…NPLY, and GHED…AEQT. An interaction with the histone H4 N-terminus region spans residues 353-357; it reads DEIED. The WD 6 repeat unit spans residues 368–408; the sequence is GHKTSINDIAVNPNINWLVASAEEDNIVQIWKCSSNIPRIG.

The protein belongs to the WD repeat RBAP46/RBAP48/MSI1 family. As to quaternary structure, component of the HAT-B complex composed of at least HAT1 and HAT2. The HAT-B complex binds to histone H4 tail.

The protein localises to the cytoplasm. The protein resides in the nucleus. Regulatory subunit of the histone acetylase B (HAT-B) complex. The complex acetylates Lys-12 of histone H4 which is required for telomeric silencing. The polypeptide is Histone acetyltransferase type B subunit 2 (HAT2) (Candida glabrata (strain ATCC 2001 / BCRC 20586 / JCM 3761 / NBRC 0622 / NRRL Y-65 / CBS 138) (Yeast)).